The chain runs to 449 residues: UDP-N-acetylmuramoylalanine--D-glutamate ligase (449 aa).

Residue 117–123 (GSNGKTT) coordinates ATP.

This sequence belongs to the MurCDEF family.

It is found in the cytoplasm. It carries out the reaction UDP-N-acetyl-alpha-D-muramoyl-L-alanine + D-glutamate + ATP = UDP-N-acetyl-alpha-D-muramoyl-L-alanyl-D-glutamate + ADP + phosphate + H(+). It participates in cell wall biogenesis; peptidoglycan biosynthesis. In terms of biological role, cell wall formation. Catalyzes the addition of glutamate to the nucleotide precursor UDP-N-acetylmuramoyl-L-alanine (UMA). The sequence is that of UDP-N-acetylmuramoylalanine--D-glutamate ligase from Exiguobacterium sibiricum (strain DSM 17290 / CCUG 55495 / CIP 109462 / JCM 13490 / 255-15).